The chain runs to 309 residues: MKTRSKLAAGFLTLMSVATLAACSGKTSNGTNVVTMKGDTITVSDFYDQVKTSKAAQQSMLTLILSRVFDTQYGDKVSDKKVSEAYNKTAKGYGNSFSSALSQAGLTPEGYKQQIRTTMLVEYAVKEAAKKELTEANYKEAYKNYTPETSVQVIKLDAEDKAKSVLKDVKADGADFAKIAKEKTTATDKKVEYKFDSAGTSLPKEVMSAAFKLDKNGVSDVVSTVDSTTYKTSYYIIKVTDKTEKKSDWKSYKNRLKEVILKDKTSDRAFQNKVISKALEKANVKIKDKAFAGILSQYATTSGSSSLKK.

A signal peptide spans 1-22 (MKTRSKLAAGFLTLMSVATLAA). Residue Cys23 is the site of N-palmitoyl cysteine attachment. Cys23 is lipidated: S-diacylglycerol cysteine. Residues 146-241 (TPETSVQVIK…TSYYIIKVTD (96 aa)) enclose the PpiC domain.

Belongs to the PrsA family.

The protein resides in the cell membrane. The catalysed reaction is [protein]-peptidylproline (omega=180) = [protein]-peptidylproline (omega=0). In terms of biological role, plays a major role in protein secretion by helping the post-translocational extracellular folding of several secreted proteins. The chain is Foldase protein PrsA from Streptococcus agalactiae serotype Ia (strain ATCC 27591 / A909 / CDC SS700).